A 311-amino-acid polypeptide reads, in one-letter code: Beta-lactamase (311 aa).

A signal peptide (tat-type signal) is located at residues 1–36; the sequence is MRKPTSSLTRRSVLGAGLGLGGALALGSTTASAASA. Serine 86 functions as the Acyl-ester intermediate in the catalytic mechanism. 252-254 is a binding site for substrate; that stretch reads KSG.

The protein belongs to the class-A beta-lactamase family. Post-translationally, predicted to be exported by the Tat system. The position of the signal peptide cleavage has not been experimentally proven.

The catalysed reaction is a beta-lactam + H2O = a substituted beta-amino acid. Its function is as follows. Hydrolyzes benzylpenicillin and cloxacillin (at 10% of the rate of benzylpenicillin). This chain is Beta-lactamase (bla), found in Streptomyces cellulosae.